The following is a 1234-amino-acid chain: DNA-directed RNA polymerase subunit beta (1234 aa).

This sequence belongs to the RNA polymerase beta chain family. The RNAP catalytic core consists of 2 alpha, 1 beta, 1 beta' and 1 omega subunit. When a sigma factor is associated with the core the holoenzyme is formed, which can initiate transcription.

It catalyses the reaction RNA(n) + a ribonucleoside 5'-triphosphate = RNA(n+1) + diphosphate. In terms of biological role, DNA-dependent RNA polymerase catalyzes the transcription of DNA into RNA using the four ribonucleoside triphosphates as substrates. The sequence is that of DNA-directed RNA polymerase subunit beta from Clostridium perfringens (strain SM101 / Type A).